Consider the following 142-residue polypeptide: Putative transcriptional regulatory protein Mevan_1098 (142 aa).

This sequence belongs to the Tfx family.

Its function is as follows. Putative transcriptional regulator. This chain is Putative transcriptional regulatory protein Mevan_1098, found in Methanococcus vannielii (strain ATCC 35089 / DSM 1224 / JCM 13029 / OCM 148 / SB).